The primary structure comprises 146 residues: Ferredoxin-thioredoxin reductase catalytic chain, chloroplastic (146 aa).

Residues 1-26 (MMSMASTTASPFCPSPMPRGRKCTVR) constitute a chloroplast transit peptide. Cys-85 contributes to the [4Fe-4S] cluster binding site. Residue Cys-87 is the Nucleophile of the active site. Cys-87 and Cys-117 are oxidised to a cystine. The [4Fe-4S] cluster site is built by Cys-104, Cys-106, and Cys-115.

It belongs to the ferredoxin thioredoxin reductase beta subunit family. Heterodimer of subunit A (variable subunit) and subunit B (catalytic subunit). Heterodimeric FTR forms a complex with ferredoxin and thioredoxin. It depends on [4Fe-4S] cluster as a cofactor.

Its subcellular location is the plastid. The protein resides in the chloroplast. The catalysed reaction is [thioredoxin]-disulfide + 2 reduced [2Fe-2S]-[ferredoxin] + 2 H(+) = [thioredoxin]-dithiol + 2 oxidized [2Fe-2S]-[ferredoxin]. In terms of biological role, catalytic subunit of the ferredoxin-thioredoxin reductase (FTR), which catalyzes the two-electron reduction of thioredoxins by the electrons provided by reduced ferredoxin. The chain is Ferredoxin-thioredoxin reductase catalytic chain, chloroplastic from Oryza sativa subsp. japonica (Rice).